Here is a 391-residue protein sequence, read N- to C-terminus: Mannose-6-phosphate isomerase (391 aa).

Q97, H99, E134, and H255 together coordinate Zn(2+). R274 is an active-site residue.

It belongs to the mannose-6-phosphate isomerase type 1 family. It depends on Zn(2+) as a cofactor.

Its subcellular location is the cytoplasm. The enzyme catalyses D-mannose 6-phosphate = D-fructose 6-phosphate. Involved in the conversion of glucose to GDP-L-fucose, which can be converted to L-fucose, a capsular polysaccharide. The protein is Mannose-6-phosphate isomerase (manA) of Salmonella typhimurium (strain LT2 / SGSC1412 / ATCC 700720).